The sequence spans 524 residues: Ribonuclease Y (524 aa).

The chain crosses the membrane as a helical span at residues 2 to 22 (GIVINLFLIIAASIVFFVVGF). The KH domain maps to 214–299 (ALSVVHIQSD…KAYQDAKKEI (86 aa)). The HD domain maps to 340-432 (LLQHSREVAM…VDAANIVSLS (93 aa)).

It belongs to the RNase Y family.

It is found in the cell membrane. Endoribonuclease that initiates mRNA decay. In Chlorobaculum tepidum (strain ATCC 49652 / DSM 12025 / NBRC 103806 / TLS) (Chlorobium tepidum), this protein is Ribonuclease Y.